Consider the following 1517-residue polypeptide: DNA-directed RNA polymerase subunit beta' (1517 aa).

Zn(2+) contacts are provided by Cys-71, Cys-73, Cys-86, and Cys-89. Residues Asp-482, Asp-484, and Asp-486 each coordinate Mg(2+). Zn(2+) contacts are provided by Cys-812, Cys-886, Cys-893, and Cys-896.

This sequence belongs to the RNA polymerase beta' chain family. In terms of assembly, the RNAP catalytic core consists of 2 alpha, 1 beta, 1 beta' and 1 omega subunit. When a sigma factor is associated with the core the holoenzyme is formed, which can initiate transcription. The cofactor is Mg(2+). Requires Zn(2+) as cofactor.

It carries out the reaction RNA(n) + a ribonucleoside 5'-triphosphate = RNA(n+1) + diphosphate. Its function is as follows. DNA-dependent RNA polymerase catalyzes the transcription of DNA into RNA using the four ribonucleoside triphosphates as substrates. The sequence is that of DNA-directed RNA polymerase subunit beta' from Campylobacter jejuni subsp. jejuni serotype O:23/36 (strain 81-176).